The chain runs to 69 residues: U-Asilidin(12)-Dg3b (69 aa).

A signal peptide spans 1–19 (MRFLNIFLFFAVMIAFVSA). A propeptide spanning residues 20–33 (SPVLEEEEIDIEPR) is cleaved from the precursor. 3 disulfide bridges follow: cysteine 36–cysteine 59, cysteine 45–cysteine 65, and cysteine 49–cysteine 67.

The protein belongs to the asilidin-12 family. As to expression, expressed by the venom gland.

It localises to the secreted. The recombinant peptide moderately increases Kv11.1/KCNH2/ERG1 currents and shifts the voltage-dependence of the channel activation to hyperpolarised potentials. In vivo, induces neurotoxic effects when injected into insects (tested on L.cuprina and A.domesticus). The sequence is that of U-Asilidin(12)-Dg3b from Dolopus genitalis (Giant Australian assassin fly).